Reading from the N-terminus, the 292-residue chain is 4-diphosphocytidyl-2-C-methyl-D-erythritol kinase (292 aa).

The active site involves K20. 103–113 (PMGGGIGGGSS) contributes to the ATP binding site. Residue D145 is part of the active site.

The protein belongs to the GHMP kinase family. IspE subfamily.

The enzyme catalyses 4-CDP-2-C-methyl-D-erythritol + ATP = 4-CDP-2-C-methyl-D-erythritol 2-phosphate + ADP + H(+). It functions in the pathway isoprenoid biosynthesis; isopentenyl diphosphate biosynthesis via DXP pathway; isopentenyl diphosphate from 1-deoxy-D-xylulose 5-phosphate: step 3/6. Its function is as follows. Catalyzes the phosphorylation of the position 2 hydroxy group of 4-diphosphocytidyl-2C-methyl-D-erythritol. The protein is 4-diphosphocytidyl-2-C-methyl-D-erythritol kinase of Cupriavidus necator (strain ATCC 17699 / DSM 428 / KCTC 22496 / NCIMB 10442 / H16 / Stanier 337) (Ralstonia eutropha).